The chain runs to 2190 residues: Integrator complex subunit 1 (2190 aa).

Positions 1-61 (MNRAKPTTVR…GLPSERKRDA (61 aa)) are disordered. Ser-13 bears the Phosphoserine mark. The span at 34–44 (GQANESKTAST) shows a compositional bias: polar residues. Lys-47 is subject to N6-acetyllysine. A Phosphothreonine modification is found at Thr-83. Residues Ser-87, Ser-307, and Ser-924 each carry the phosphoserine modification. The disordered stretch occupies residues 922–945 (AASGEEDDEGESKEQKAKKRQRQQ). Residues 923–932 (ASGEEDDEGE) show a composition bias toward acidic residues. The chain crosses the membrane as a helical span at residues 1159-1179 (TATMHILVVHAMVILLTLGPP). Positions 1311–1334 (SLPPRRDSTEAPKPKSSPEQPIGQ) are disordered. Residues 1314–1323 (PRRDSTEAPK) are compositionally biased toward basic and acidic residues. A phosphoserine mark is found at Ser-1318, Ser-1326, Ser-1327, and Ser-1395.

This sequence belongs to the Integrator subunit 1 family. As to quaternary structure, component of the Integrator complex, composed of core subunits INTS1, INTS2, INTS3, INTS4, INTS5, INTS6, INTS7, INTS8, INTS9/RC74, INTS10, INTS11/CPSF3L, INTS12, INTS13, INTS14 and INTS15. The core complex associates with protein phosphatase 2A subunits PPP2CA and PPP2R1A, to form the Integrator-PP2A (INTAC) complex. Interacts with ESRRB, ESRRB is not a core component of the Integrator complex and this association is a bridge for the interaction with the multiprotein complex Integrator; attracts the transcriptional machinery.

It localises to the nucleus. The protein resides in the nucleus membrane. Functionally, component of the integrator complex, a multiprotein complex that terminates RNA polymerase II (Pol II) transcription in the promoter-proximal region of genes. The integrator complex provides a quality checkpoint during transcription elongation by driving premature transcription termination of transcripts that are unfavorably configured for transcriptional elongation: the complex terminates transcription by (1) catalyzing dephosphorylation of the C-terminal domain (CTD) of Pol II subunit POLR2A/RPB1 and SUPT5H/SPT5, (2) degrading the exiting nascent RNA transcript via endonuclease activity and (3) promoting the release of Pol II from bound DNA. The integrator complex is also involved in terminating the synthesis of non-coding Pol II transcripts, such as enhancer RNAs (eRNAs), small nuclear RNAs (snRNAs), telomerase RNAs and long non-coding RNAs (lncRNAs). Within the integrator complex, INTS1 is involved in the post-termination step: INTS1 displaces INTS3 and the SOSS factors, allowing the integrator complex to return to the closed conformation, ready to bind to the paused elongation complex for another termination cycle. Mediates recruitment of cytoplasmic dynein to the nuclear envelope, probably as component of the integrator complex. This Homo sapiens (Human) protein is Integrator complex subunit 1.